Reading from the N-terminus, the 741-residue chain is MLERKKPKTAENQKASEENEITQPGGSSAKPALPCLNFEAVLSPAPALIHSTHSLTNSHAHTGSSDCDISCKGMTERIHSINLHNFSNSVLETLNEQRNRGHFCDVTVRIHGSMLRAHRCVLAAGSPFFQDKLLLGYSDIEIPSVVSVQSVQKLIDFMYSGVLRVSQSEALQILTAASILQIKTVIDECTRIVSQNVGDVFPGIQDSGQDTPRGTPESGTSGQSSDTESGYLQSHPQHSVDRIYSALYACSMQNGSGERSFYSGAVVSHHETALGLPRDHHMEDPSWITRIHERSQQMERYLSTTPETTHCRKQPRPVRIQTLVGNIHIKQEMEDDYDYYGQQRVQILERNESEECTEDTDQAEGTESEPKGESFDSGVSSSIGTEPDSVEQQFGAAAPRDGQAEPAQPEQAAEAPAESSAQPNQLEPGASSPERSNESEMDNTVITVSNSSDKGVLQQPSVNTSIGQPLPSTQLYLRQTETLTSNLRMPLTLTSNTQVIGTAGNTYLPALFTTQPAGSGPKPFLFSLPQPLTGQQTQFVTVSQPGLSTFTAQLPAPQPLASSAGHSTASGQGDKKPYECTLCNKTFTAKQNYVKHMFVHTGEKPHQCSICWRSFSLKDYLIKHMVTHTGVRAYQCSICNKRFTQKSSLNVHMRLHRGEKSYECYICKKKFSHKTLLERHVALHSASNGTPPAGTPPGARAGPPGVVACTEGTTYVCSVCPAKFDQIEQFNDHMRMHVSDG.

Over residues 1-17 (MLERKKPKTAENQKASE) the composition is skewed to basic and acidic residues. Residues 1–28 (MLERKKPKTAENQKASEENEITQPGGSS) are disordered. One can recognise a BTB domain in the interval 104-167 (CDVTVRIHGS…MYSGVLRVSQ (64 aa)). The disordered stretch occupies residues 203 to 235 (GIQDSGQDTPRGTPESGTSGQSSDTESGYLQSH). Residues 206–235 (DSGQDTPRGTPESGTSGQSSDTESGYLQSH) show a composition bias toward polar residues. Threonine 211 bears the Phosphothreonine mark. Lysine 330 is covalently cross-linked (Glycyl lysine isopeptide (Lys-Gly) (interchain with G-Cter in SUMO1); alternate). Lysine 330 is covalently cross-linked (Glycyl lysine isopeptide (Lys-Gly) (interchain with G-Cter in SUMO2); alternate). The disordered stretch occupies residues 350 to 440 (RNESEECTED…SSPERSNESE (91 aa)). A Phosphoserine modification is found at serine 353. Residues 354–367 (EECTEDTDQAEGTE) are compositionally biased toward acidic residues. Position 357 is a phosphothreonine (threonine 357). Lysine 371 is covalently cross-linked (Glycyl lysine isopeptide (Lys-Gly) (interchain with G-Cter in SUMO2)). Over residues 404–423 (AEPAQPEQAAEAPAESSAQP) the composition is skewed to low complexity. 4 consecutive C2H2-type zinc fingers follow at residues 578-600 (YECT…MFVH), 606-628 (HQCS…MVTH), 634-656 (YQCS…MRLH), and 662-684 (YECY…VALH). Phosphothreonine is present on residues threonine 690 and threonine 695. The segment at 715 to 737 (YVCSVCPAKFDQIEQFNDHMRMH) adopts a C2H2-type 5 zinc-finger fold. Lysine 723 is covalently cross-linked (Glycyl lysine isopeptide (Lys-Gly) (interchain with G-Cter in SUMO2)).

In terms of assembly, can homodimerize. Binds to DNA. In terms of processing, sumoylated with SUMO1. As to expression, specifically expressed in early hippocampal neurons, cerebellar granule cells and gliogenic progenitors as well as in differentiated glia. Expressed in adult and aged myogenic satellite cells.

The protein localises to the nucleus. Its function is as follows. May be a transcription factor that may be involved in hematopoiesis, oncogenesis, and immune responses. Plays a role in postnatal myogenesis, may be involved in the regulation of satellite cells self-renewal. This Mus musculus (Mouse) protein is Zinc finger and BTB domain-containing protein 20 (Zbtb20).